Reading from the N-terminus, the 540-residue chain is MTTDKKSKSKSSEKSTQEVEQVIKPEKTPILDTSKWPLLLKNYDQLSVRTGHYTPIPNGHSPLKRPIKEYVKYGIINLDKPSNPSSHEVVAWIRTILRVTKTGHSGTLDPKVTGCLIVCIERATRLVKSQQGAGKEYIGIVRLHGAIEGTTELSKAVDTLTGALFQRPPQKSAVKKRLRVRTIHNSKLLEFDPERNLGLIWVDCEAGTYIRTLCVHIGLLMGVGGHMQELRRVRSGIMSEKKGQVTMHDVKDAQYEYDNSKDESYLRRVIQPLEAILTNYKRIVVKDSAINAICYGAKLMIPGLLRYEQDIESNEEVVLITTKGEAIAIGIAQMTTASMATCDHGVVATIKRVIMDRDVYPVRWGLGPKAKVKKEMIKDGKLDKFGKPNEKTPSDWTNTYTYYTGQVATTTTTSPVESMNVDTPKKATASVAVKAEVESSEDEKPVPKKEKKDKKEKKKDSSDDESEEEKSSKKDKKEKKEKKEKKEKKSSKDDSDDESSKKEKKDKKRKKSSDKDSDSEKESSDKKDKKDKKEKKKSKN.

The interval 1 to 24 (MTTDKKSKSKSSEKSTQEVEQVIK) is disordered. Catalysis depends on Asp109, which acts as the Nucleophile. The 76-residue stretch at 280-355 (YKRIVVKDSA…VVATIKRVIM (76 aa)) folds into the PUA domain. The disordered stretch occupies residues 414-540 (SPVESMNVDT…DKKEKKKSKN (127 aa)). Residues 448–494 (KKEKKDKKEKKKDSSDDESEEEKSSKKDKKEKKEKKEKKEKKSSKDD) are a coiled coil. Basic residues predominate over residues 473–489 (KKDKKEKKEKKEKKEKK). Composition is skewed to basic and acidic residues over residues 490-503 (SSKDDSDDESSKKE) and 513-528 (SDKDSDSEKESSDKKD). Residues 529-540 (KKDKKEKKKSKN) show a composition bias toward basic residues.

The protein belongs to the pseudouridine synthase TruB family. In terms of assembly, component of the small nucleolar ribonucleoprotein particles containing H/ACA-type snoRNAs (H/ACA snoRNPs).

The protein resides in the nucleus. It localises to the nucleolus. The catalysed reaction is a uridine in RNA = a pseudouridine in RNA. Plays a central role in ribosomal RNA processing. Probable catalytic subunit of H/ACA small nucleolar ribonucleoprotein (H/ACA snoRNP) complex, which catalyzes pseudouridylation of rRNA. This involves the isomerization of uridine such that the ribose is subsequently attached to C5, instead of the normal N1. Pseudouridine ('psi') residues may serve to stabilize the conformation of rRNAs. The chain is Probable H/ACA ribonucleoprotein complex subunit 4 (nola4) from Dictyostelium discoideum (Social amoeba).